A 321-amino-acid polypeptide reads, in one-letter code: Polyamine aminopropyltransferase (321 aa).

The 234-residue stretch at 23 to 256 (HLLYLEHAGP…DEWSFSFGSD (234 aa)) folds into the PABS domain. Glutamine 53 serves as a coordination point for S-methyl-5'-thioadenosine. 2 residues coordinate spermidine: histidine 84 and aspartate 108. S-methyl-5'-thioadenosine is bound by residues glutamate 127 and 159-160 (DG). Catalysis depends on aspartate 177, which acts as the Proton acceptor.

The protein belongs to the spermidine/spermine synthase family. As to quaternary structure, homodimer or homotetramer.

Its subcellular location is the cytoplasm. It carries out the reaction S-adenosyl 3-(methylsulfanyl)propylamine + putrescine = S-methyl-5'-thioadenosine + spermidine + H(+). The protein operates within amine and polyamine biosynthesis; spermidine biosynthesis; spermidine from putrescine: step 1/1. Functionally, catalyzes the irreversible transfer of a propylamine group from the amino donor S-adenosylmethioninamine (decarboxy-AdoMet) to putrescine (1,4-diaminobutane) to yield spermidine. The chain is Polyamine aminopropyltransferase from Korarchaeum cryptofilum (strain OPF8).